The sequence spans 205 residues: Outer-membrane lipoprotein LolB (205 aa).

Residues 1 to 17 (MFLRHCITFTLIALLAG) form the signal peptide. The N-palmitoyl cysteine moiety is linked to residue C18. C18 carries S-diacylglycerol cysteine lipidation.

It belongs to the LolB family. As to quaternary structure, monomer.

It localises to the cell outer membrane. Its function is as follows. Plays a critical role in the incorporation of lipoproteins in the outer membrane after they are released by the LolA protein. The sequence is that of Outer-membrane lipoprotein LolB from Pseudomonas putida (strain W619).